We begin with the raw amino-acid sequence, 534 residues long: Probable cytochrome c oxidase subunit 1 (534 aa).

The next 8 helical transmembrane spans lie at 35–55 (IMYIIFAIFAGVVGGLFSLLF), 76–96 (VLITVHAIIMVFFMIMPALFS), 97–117 (GFGNYFVPLLIGAPDMAFPRL), 120–140 (ISFWLLIPAFLLLISSTFIDG), 165–185 (VAIFSLHLTGLSSILGSINLI), 202–222 (PLFVWSILVTAFLIILAMPVL), 254–274 (LFWFFGHPEVYIVILPGFGIV), and 286–306 (IFGYQGMVGAMVIIGFVGFIV). Residue His-81 participates in Fe(II)-heme a binding. The Cu cation site is built by His-260 and Tyr-264. The 1'-histidyl-3'-tyrosine (His-Tyr) cross-link spans 260–264 (HPEVY). 2 residues coordinate Cu cation: His-309 and His-310. 2 helical membrane-spanning segments follow: residues 320–340 (ALIYFTAGTMIIAVPTGIKIF) and 357–377 (MLFAIGFIILFTIGGVTGIIL). His-395 contacts heme a3. 3 helical membrane passes run 396–416 (FHYTMSLGALFTAFAGFYYWF), 433–453 (FWITFIGVNLTFFPQHFLGLA), and 475–495 (IGAGISIFAAFYFVFIVFYTL). His-397 lines the Fe(II)-heme a pocket.

It belongs to the heme-copper respiratory oxidase family.

It is found in the cell membrane. The catalysed reaction is 4 Fe(II)-[cytochrome c] + O2 + 8 H(+)(in) = 4 Fe(III)-[cytochrome c] + 2 H2O + 4 H(+)(out). It functions in the pathway energy metabolism; oxidative phosphorylation. Functionally, cytochrome c oxidase is the component of the respiratory chain that catalyzes the reduction of oxygen to water. Subunits 1-3 form the functional core of the enzyme complex. CO I is the catalytic subunit of the enzyme. Electrons originating in cytochrome c are transferred via the copper A center of subunit 2 and heme A of subunit 1 to the bimetallic center formed by heme A3 and copper B. The polypeptide is Probable cytochrome c oxidase subunit 1 (ctaD) (Rickettsia prowazekii (strain Madrid E)).